Reading from the N-terminus, the 180-residue chain is Large ribosomal subunit protein uL6 (180 aa).

The protein belongs to the universal ribosomal protein uL6 family. In terms of assembly, part of the 50S ribosomal subunit.

Its function is as follows. This protein binds to the 23S rRNA, and is important in its secondary structure. It is located near the subunit interface in the base of the L7/L12 stalk, and near the tRNA binding site of the peptidyltransferase center. This chain is Large ribosomal subunit protein uL6, found in Flavobacterium johnsoniae (strain ATCC 17061 / DSM 2064 / JCM 8514 / BCRC 14874 / CCUG 350202 / NBRC 14942 / NCIMB 11054 / UW101) (Cytophaga johnsonae).